The primary structure comprises 175 residues: Ribosome maturation factor RimM (175 aa).

Residues 103-175 form the PRC barrel domain; sequence EGEYYWSDLI…LLTVDWDPDF (73 aa).

Belongs to the RimM family. Binds ribosomal protein uS19.

The protein resides in the cytoplasm. Functionally, an accessory protein needed during the final step in the assembly of 30S ribosomal subunit, possibly for assembly of the head region. Essential for efficient processing of 16S rRNA. May be needed both before and after RbfA during the maturation of 16S rRNA. It has affinity for free ribosomal 30S subunits but not for 70S ribosomes. The polypeptide is Ribosome maturation factor RimM (Nitrosococcus oceani (strain ATCC 19707 / BCRC 17464 / JCM 30415 / NCIMB 11848 / C-107)).